The primary structure comprises 460 residues: A-type ATP synthase subunit B (460 aa).

Belongs to the ATPase alpha/beta chains family. In terms of assembly, has multiple subunits with at least A(3), B(3), C, D, E, F, H, I and proteolipid K(x).

It is found in the cell membrane. Component of the A-type ATP synthase that produces ATP from ADP in the presence of a proton gradient across the membrane. The B chain is a regulatory subunit. This chain is A-type ATP synthase subunit B, found in Methanosarcina barkeri (strain Fusaro / DSM 804).